Reading from the N-terminus, the 179-residue chain is Large ribosomal subunit protein uL5 (179 aa).

It belongs to the universal ribosomal protein uL5 family. As to quaternary structure, part of the 50S ribosomal subunit; part of the 5S rRNA/L5/L18/L25 subcomplex. Contacts the 5S rRNA and the P site tRNA. Forms a bridge to the 30S subunit in the 70S ribosome.

In terms of biological role, this is one of the proteins that bind and probably mediate the attachment of the 5S RNA into the large ribosomal subunit, where it forms part of the central protuberance. In the 70S ribosome it contacts protein S13 of the 30S subunit (bridge B1b), connecting the 2 subunits; this bridge is implicated in subunit movement. Contacts the P site tRNA; the 5S rRNA and some of its associated proteins might help stabilize positioning of ribosome-bound tRNAs. The protein is Large ribosomal subunit protein uL5 of Cronobacter sakazakii (strain ATCC BAA-894) (Enterobacter sakazakii).